Reading from the N-terminus, the 416-residue chain is Phosphoglycerate kinase (416 aa).

Residues 28–30 (DMN), Arg-44, 65–68 (HQSR), Arg-122, and Arg-162 each bind substrate. ATP contacts are provided by residues Glu-337 and 362-365 (GGHI).

Belongs to the phosphoglycerate kinase family. In terms of assembly, monomer.

Its subcellular location is the cytoplasm. It catalyses the reaction (2R)-3-phosphoglycerate + ATP = (2R)-3-phospho-glyceroyl phosphate + ADP. Its pathway is carbohydrate degradation; glycolysis; pyruvate from D-glyceraldehyde 3-phosphate: step 2/5. This chain is Phosphoglycerate kinase, found in Methanosarcina mazei (strain ATCC BAA-159 / DSM 3647 / Goe1 / Go1 / JCM 11833 / OCM 88) (Methanosarcina frisia).